The following is a 287-amino-acid chain: MAGAKEIRSKIASVQNTQKITKAMEMVAASKMRKSQDRMAASRPYADTMRKVIGHLATGNLEYKHPYLEERDVKRVGYLVVSTDRGLCGGLNINLFKKLLADMKAWSDKGVQCDIAMIGSKGVSFFNSVGGNIVAQVTGMGDNPSLSDLIGPVKVMLQAYDEGRLDKLYVVSNKFINTMSQAPTITQLLPLPASEDDELKHKSWDYLYEPDPKALLDTLLRRYVESQVYQGVVENLASEQAARMVAMKAATDNGGSLIKELQLVYNKARQASITQELTEIVSGAAAV.

Belongs to the ATPase gamma chain family. In terms of assembly, F-type ATPases have 2 components, CF(1) - the catalytic core - and CF(0) - the membrane proton channel. CF(1) has five subunits: alpha(3), beta(3), gamma(1), delta(1), epsilon(1). CF(0) has three main subunits: a, b and c.

The protein localises to the cell inner membrane. Its function is as follows. Produces ATP from ADP in the presence of a proton gradient across the membrane. The gamma chain is believed to be important in regulating ATPase activity and the flow of protons through the CF(0) complex. The chain is ATP synthase gamma chain from Cronobacter sakazakii (strain ATCC BAA-894) (Enterobacter sakazakii).